The sequence spans 499 residues: Pentatricopeptide repeat-containing protein PPR5, chloroplastic (499 aa).

The segment covering 1–12 (MLACPSTSSPWP) has biased composition (low complexity). The tract at residues 1–28 (MLACPSTSSPWPQRQPPSPCPGGGGGAT) is disordered. A chloroplast-targeting transit peptide spans 1-45 (MLACPSTSSPWPQRQPPSPCPGGGGGATRHVALAARSKRRGAGPA). PPR repeat units follow at residues 123-157 (DNGIYSKLISVMGRKGQIRMAMWLFSQMRNSGCKP), 158-193 (DTSVYNSLIGAHLHSRDKTKALAKALGYFEKMKCIE), 198-232 (TIVTYNILLRAFAQAGDTKQVDMLFKDLDESVVSP), 233-267 (DVYTYNGVLDAYGKNGMIKEMESVLVRMKSTQCRP), 268-302 (DVITFNILIDSYGRKQTFDKMEQVFKSLLRSKERP), 303-337 (THPTFNSMITNYGRARLREKAESVVEKMEELGFKP), 338-372 (NYVTQECLIIMYAHCDCVSKARQVFDELVTSQTKV), 373-407 (HLSSLNSMLEAYCMNGLHTEADRLLDTALQQCVVP), and 408-442 (NGSTYKLLYKAYTKANDKLLVQKLLKRMNKQGIVP). The segment at 458–499 (DRKPRTSPGINSASKPSTDSAGDSETATSDKPEVSVWHVAAT) is disordered. Residues 465–484 (PGINSASKPSTDSAGDSETA) show a composition bias toward polar residues.

Belongs to the PPR family. P subfamily.

It localises to the plastid. The protein resides in the chloroplast. Its function is as follows. Involved in the biogenesis of the plastid translation machinery by promoting the splicing of group II introns in chloroplasts. Stabilizes the chloroplast trnG pre-RNA by directly binding to a group II intron, where it protects an endonuclease-sensitive site and stimulates splicing. Binds specific sites within group II intron trnG pre-RNA. Binds with high affinity to the 5'-UTR of the chloroplastic petA mRNA. The polypeptide is Pentatricopeptide repeat-containing protein PPR5, chloroplastic (Zea mays (Maize)).